Reading from the N-terminus, the 393-residue chain is MPMVIHSTSASWGTALKPITNSSSDTITPNPNLITTSRGSSTRPSYITTLTAKKMEQLLPMVINTWNMSEANEMAWRILQQSEGGVRQTRNAVVEGVTRCEELQCFHSVGYGGSPDERGETTLDAMVMDGGLMDVGAVGGLRNIKEAIRVARFVLEHTSHTLLVGQSATDFAVSMGFRTSSLVTPWSHDEWEKWKAKNCQPNCWLNVNPDPKLSCGPYVPKATPLTRWKEDRARNEYEIGENNHDTIGMIAIDVENQIHTGTSTNGMTHKIPGRVGDSPIVGAGSYADNEVGAAVATGDGDVMMRFLPSLLAVEAMRNGKSPQEAAELGIKRIAKYYKDFIGAVIAVNRLGQYAAACYGIPEFPYMISNPTHTVSVQTVKCLPYVHVEPLPKS.

The tract at residues 15-41 (ALKPITNSSSDTITPNPNLITTSRGSS) is disordered. Residues 19–41 (ITNSSSDTITPNPNLITTSRGSS) are compositionally biased toward polar residues. 2 cysteine pairs are disulfide-bonded: C100-C105 and C199-C215. T246 functions as the Nucleophile in the catalytic mechanism. Residues 274–277 (RVGD) and 297–300 (TGDG) contribute to the substrate site. C357 and C381 are oxidised to a cystine.

This sequence belongs to the Ntn-hydrolase family. In terms of assembly, heterotetramer of two alpha and two beta chains arranged as a dimer of alpha/beta heterodimers. In terms of processing, cleaved into an alpha and beta chain by autocatalysis; this activates the enzyme. The N-terminal residue of the beta subunit is responsible for the nucleophile hydrolase activity.

It catalyses the reaction N(4)-(beta-N-acetyl-D-glucosaminyl)-L-asparagine + H2O = N-acetyl-beta-D-glucosaminylamine + L-aspartate + H(+). Its function is as follows. Cleaves the GlcNAc-Asn bond which joins oligosaccharides to the peptide of asparagine-linked glycoproteins. The chain is Putative N(4)-(beta-N-acetylglucosaminyl)-L-asparaginase GH22932 from Drosophila grimshawi (Hawaiian fruit fly).